Reading from the N-terminus, the 1031-residue chain is Zinc finger protein 445 (1031 aa).

The tract at residues M1–P43 is disordered. Residues S17–E29 show a composition bias toward basic and acidic residues. K28 participates in a covalent cross-link: Glycyl lysine isopeptide (Lys-Gly) (interchain with G-Cter in SUMO1). The 83-residue stretch at R55–L137 folds into the SCAN box domain. The KRAB domain maps to M234–N304. Residues K317, K374, K375, and K399 each participate in a glycyl lysine isopeptide (Lys-Gly) (interchain with G-Cter in SUMO2) cross-link. C2H2-type zinc fingers lie at residues F485 to H507, F513 to H535, and Y541 to H563. Residue K567 forms a Glycyl lysine isopeptide (Lys-Gly) (interchain with G-Cter in SUMO2) linkage. 2 consecutive C2H2-type zinc fingers follow at residues F597–H619 and Y625–H647. A Glycyl lysine isopeptide (Lys-Gly) (interchain with G-Cter in SUMO2) cross-link involves residue K654. C2H2-type zinc fingers lie at residues F681–H703 and Y709–H731. Residues K736 and K758 each participate in a glycyl lysine isopeptide (Lys-Gly) (interchain with G-Cter in SUMO2) cross-link. 5 consecutive C2H2-type zinc fingers follow at residues Y762–H784, Y790–H812, F840–H862, Y868–H890, and F896–H918. Residues L911 to L939 are disordered. Residues K938, K956, and K975 each participate in a glycyl lysine isopeptide (Lys-Gly) (interchain with G-Cter in SUMO2) cross-link. 2 consecutive C2H2-type zinc fingers follow at residues H978 to H1000 and F1006 to H1028.

It belongs to the krueppel C2H2-type zinc-finger protein family.

The protein localises to the nucleus. Functionally, transcription regulator required to maintain maternal and paternal gene imprinting, a process by which gene expression is restricted in a parent of origin-specific manner by epigenetic modification of genomic DNA and chromatin, including DNA methylation. Acts by controlling DNA methylation during the earliest multicellular stages of development at multiple imprinting control regions (ICRs). Acts together with ZFP57, but seems to be the major factor in human early embryonic imprinting maintenance. In contrast, in mice, ZFP57 plays the predominant role in imprinting maintenance. This chain is Zinc finger protein 445, found in Homo sapiens (Human).